We begin with the raw amino-acid sequence, 113 residues long: uncharacterized protein (113 aa).

The HTH cro/C1-type domain occupies 16-70 (LYEYLEPLDLKINELAELLHVHRNSVSALINNNRKLTTEMAFRLAKVFDTTVDFW). The H-T-H motif DNA-binding region spans 27–46 (INELAELLHVHRNSVSALIN).

It belongs to the VapA/VapI family.

This is an uncharacterized protein from Escherichia coli O6:H1 (strain CFT073 / ATCC 700928 / UPEC).